A 104-amino-acid chain; its full sequence is uncharacterized protein (104 aa).

This is an uncharacterized protein from Homo sapiens (Human).